Reading from the N-terminus, the 165-residue chain is Lipoprotein signal peptidase (165 aa).

Helical transmembrane passes span 68–88 (PLLP…GLFG) and 100–120 (GFLL…GEVI). Residues Asp-121 and Asp-137 contribute to the active site. Residues 130–150 (FPVFNIADISINVGLACLIFA) form a helical membrane-spanning segment.

It belongs to the peptidase A8 family.

It localises to the cell inner membrane. It carries out the reaction Release of signal peptides from bacterial membrane prolipoproteins. Hydrolyzes -Xaa-Yaa-Zaa-|-(S,diacylglyceryl)Cys-, in which Xaa is hydrophobic (preferably Leu), and Yaa (Ala or Ser) and Zaa (Gly or Ala) have small, neutral side chains.. It functions in the pathway protein modification; lipoprotein biosynthesis (signal peptide cleavage). Its function is as follows. This protein specifically catalyzes the removal of signal peptides from prolipoproteins. The polypeptide is Lipoprotein signal peptidase (Acaryochloris marina (strain MBIC 11017)).